The chain runs to 21 residues: Protopolybiakinin-1 (21 aa).

The segment covering 1-11 (DKNKKPIRVGG) has biased composition (basic residues). A disordered region spans residues 1 to 21 (DKNKKPIRVGGRRPPGFTPFR).

The protein belongs to the bradykinin-related peptide family. As to expression, expressed by the venom gland.

The protein localises to the secreted. Causes constriction of the isolated rat ileum muscles (is 13-fold less potent than bradykinin (BK)), as well as degranulation of mast cells (is 7-fold more potent than BK). In vivo, causes algesic effects. Muscle constriction and algesic effects are partially mediated by bradykinin receptors B2 (BDKRB2). The sequence is that of Protopolybiakinin-1 from Protopolybia exigua (Neotropical social wasp).